Consider the following 224-residue polypeptide: Heme response regulator HssR (224 aa).

One can recognise a Response regulatory domain in the interval 3-116; that stretch reads QCLVVDDDPR…ELIFRIRAVL (114 aa). The residue at position 52 (Asp52) is a 4-aspartylphosphate. Positions 124 to 222 form a DNA-binding region, ompR/PhoB-type; sequence NSEMTIGNLT…VRGQGYKVEN (99 aa).

Phosphorylated by HssS.

It is found in the cytoplasm. In terms of biological role, member of the two-component regulatory system HssS/HssR involved in intracellular heme homeostasis and tempering of staphylococcal virulence. Phosphorylated HssR binds to a direct repeat sequence within hrtAB promoter and activates the expression of hrtAB, an efflux pump, in response to extracellular heme, hemin, hemoglobin or blood. This is Heme response regulator HssR (hssR) from Staphylococcus aureus (strain MRSA252).